The primary structure comprises 122 residues: Large ribosomal subunit protein bL12 (122 aa).

The protein belongs to the bacterial ribosomal protein bL12 family. Homodimer. Part of the ribosomal stalk of the 50S ribosomal subunit. Forms a multimeric L10(L12)X complex, where L10 forms an elongated spine to which 2 to 4 L12 dimers bind in a sequential fashion. Binds GTP-bound translation factors.

In terms of biological role, forms part of the ribosomal stalk which helps the ribosome interact with GTP-bound translation factors. Is thus essential for accurate translation. The chain is Large ribosomal subunit protein bL12 from Aliivibrio fischeri (strain ATCC 700601 / ES114) (Vibrio fischeri).